The primary structure comprises 595 residues: Indole-3-acetic acid-amido synthetase GH3.3 (595 aa).

It belongs to the IAA-amido conjugating enzyme family.

Functionally, catalyzes the synthesis of indole-3-acetic acid (IAA)-amino acid conjugates, providing a mechanism for the plant to cope with the presence of excess auxin. Strongly reactive with Glu, Gln, Trp, Asp, Ala, Leu, Phe, Gly, Tyr, Met, Ile and Val. Little or no product formation with His, Ser, Thr, Arg, Lys, or Cys. Also active on pyruvic and butyric acid analogs of IAA, PAA and the synthetic auxin naphthaleneacetic acid (NAA). The two chlorinated synthetic auxin herbicides 2,4-D and 3,6-dichloro-o-anisic acid (dicamba) cannot be used as substrates. This chain is Indole-3-acetic acid-amido synthetase GH3.3 (GH3.3), found in Arabidopsis thaliana (Mouse-ear cress).